Consider the following 272-residue polypeptide: Large ribosomal subunit protein uL2 (272 aa).

Residues 222–272 (GTAMNPVDHPHGGGEGRNFGKHPVSPWGKKTKGKKTRNNRLTDKFIVHRRS) form a disordered region. Residues 250 to 259 (KKTKGKKTRN) show a composition bias toward basic residues. The segment covering 261-272 (RLTDKFIVHRRS) has biased composition (basic and acidic residues).

It belongs to the universal ribosomal protein uL2 family. As to quaternary structure, part of the 50S ribosomal subunit. Forms a bridge to the 30S subunit in the 70S ribosome.

Functionally, one of the primary rRNA binding proteins. Required for association of the 30S and 50S subunits to form the 70S ribosome, for tRNA binding and peptide bond formation. It has been suggested to have peptidyltransferase activity; this is somewhat controversial. Makes several contacts with the 16S rRNA in the 70S ribosome. The chain is Large ribosomal subunit protein uL2 from Baumannia cicadellinicola subsp. Homalodisca coagulata.